Reading from the N-terminus, the 429-residue chain is Enolase (429 aa).

Gln162 contacts (2R)-2-phosphoglycerate. Glu204 (proton donor) is an active-site residue. The Mg(2+) site is built by Asp241, Glu288, and Asp315. The (2R)-2-phosphoglycerate site is built by Lys340, Arg369, Ser370, and Lys391. Catalysis depends on Lys340, which acts as the Proton acceptor.

This sequence belongs to the enolase family. It depends on Mg(2+) as a cofactor.

The protein resides in the cytoplasm. Its subcellular location is the secreted. It localises to the cell surface. It catalyses the reaction (2R)-2-phosphoglycerate = phosphoenolpyruvate + H2O. The protein operates within carbohydrate degradation; glycolysis; pyruvate from D-glyceraldehyde 3-phosphate: step 4/5. Its function is as follows. Catalyzes the reversible conversion of 2-phosphoglycerate (2-PG) into phosphoenolpyruvate (PEP). It is essential for the degradation of carbohydrates via glycolysis. This chain is Enolase, found in Bacteroides fragilis (strain ATCC 25285 / DSM 2151 / CCUG 4856 / JCM 11019 / LMG 10263 / NCTC 9343 / Onslow / VPI 2553 / EN-2).